Consider the following 363-residue polypeptide: Isopentenyl-diphosphate delta-isomerase (363 aa).

Residue 6 to 7 participates in substrate binding; it reads RK. Residues 64–66, S94, and N123 contribute to the FMN site; that span reads AMT. Q153 lines the substrate pocket. E154 contacts Mg(2+). Residues K185, S210, T215, 259-261, and 280-281 each bind FMN; these read GVR and SA.

The protein belongs to the IPP isomerase type 2 family. In terms of assembly, homooctamer. Dimer of tetramers. Mg(2+) serves as cofactor. FMN is required as a cofactor. Requires NADPH as cofactor.

The protein localises to the cytoplasm. It carries out the reaction isopentenyl diphosphate = dimethylallyl diphosphate. Functionally, involved in the biosynthesis of isoprenoids. Catalyzes the 1,3-allylic rearrangement of the homoallylic substrate isopentenyl (IPP) to its allylic isomer, dimethylallyl diphosphate (DMAPP). The sequence is that of Isopentenyl-diphosphate delta-isomerase from Streptomyces sp. (strain CL190).